The following is a 241-amino-acid chain: Purine nucleoside phosphorylase DeoD-type (241 aa).

Histidine 5 lines the a purine D-ribonucleoside pocket. Residues glycine 21, arginine 25, arginine 44, and 88 to 91 (RVGS) each bind phosphate. A purine D-ribonucleoside contacts are provided by residues 180–182 (EME) and 204–205 (SD). The active-site Proton donor is aspartate 205.

Belongs to the PNP/UDP phosphorylase family. Homohexamer; trimer of homodimers.

The enzyme catalyses a purine D-ribonucleoside + phosphate = a purine nucleobase + alpha-D-ribose 1-phosphate. The catalysed reaction is a purine 2'-deoxy-D-ribonucleoside + phosphate = a purine nucleobase + 2-deoxy-alpha-D-ribose 1-phosphate. Its function is as follows. Catalyzes the reversible phosphorolytic breakdown of the N-glycosidic bond in the beta-(deoxy)ribonucleoside molecules, with the formation of the corresponding free purine bases and pentose-1-phosphate. This is Purine nucleoside phosphorylase DeoD-type from Yersinia enterocolitica serotype O:8 / biotype 1B (strain NCTC 13174 / 8081).